A 640-amino-acid chain; its full sequence is uncharacterized protein (640 aa).

14 consecutive transmembrane segments (helical) span residues 8 to 28, 52 to 72, 90 to 110, 136 to 156, 179 to 199, 208 to 228, 241 to 261, 277 to 297, 298 to 318, 352 to 372, 391 to 411, 446 to 466, 497 to 517, and 619 to 639; these read GGVV…LGMF, LGGF…CYLI, LFVA…FLLA, LWYA…LVVL, VFML…LHAW, PSPV…YGIV, WWGL…VLQA, ENMG…DTGA, YGPA…HAAF, TVFF…AGFV, IVAL…GLSV, AIAA…APMV, IAPG…AVLA, and GSVH…LVVA.

The protein belongs to the complex I subunit 4 family.

Its subcellular location is the cell membrane. This is an uncharacterized protein from Mycobacterium tuberculosis (strain CDC 1551 / Oshkosh).